We begin with the raw amino-acid sequence, 238 residues long: Pyridoxine 5'-phosphate synthase (238 aa).

Residue N6 coordinates 3-amino-2-oxopropyl phosphate. 8–9 (DH) contacts 1-deoxy-D-xylulose 5-phosphate. R17 is a 3-amino-2-oxopropyl phosphate binding site. Catalysis depends on H42, which acts as the Proton acceptor. 1-deoxy-D-xylulose 5-phosphate is bound by residues R44 and H49. The active-site Proton acceptor is E69. T99 lines the 1-deoxy-D-xylulose 5-phosphate pocket. Catalysis depends on H186, which acts as the Proton donor. Residues G187 and 208–209 (GH) contribute to the 3-amino-2-oxopropyl phosphate site.

Belongs to the PNP synthase family. Homooctamer; tetramer of dimers.

Its subcellular location is the cytoplasm. It carries out the reaction 3-amino-2-oxopropyl phosphate + 1-deoxy-D-xylulose 5-phosphate = pyridoxine 5'-phosphate + phosphate + 2 H2O + H(+). Its pathway is cofactor biosynthesis; pyridoxine 5'-phosphate biosynthesis; pyridoxine 5'-phosphate from D-erythrose 4-phosphate: step 5/5. In terms of biological role, catalyzes the complicated ring closure reaction between the two acyclic compounds 1-deoxy-D-xylulose-5-phosphate (DXP) and 3-amino-2-oxopropyl phosphate (1-amino-acetone-3-phosphate or AAP) to form pyridoxine 5'-phosphate (PNP) and inorganic phosphate. The polypeptide is Pyridoxine 5'-phosphate synthase (Anaplasma marginale (strain St. Maries)).